A 254-amino-acid chain; its full sequence is Keratin-associated protein 24-1 (254 aa).

6 tandem repeats follow at residues 193 to 202 (YISNSCQPQS), 203 to 212 (YLVRNYHYSS), 213 to 222 (YRPTSCRPLS), 223 to 232 (YLSRSFRSLS), 233 to 242 (YIPSTFPPLR), and 243 to 252 (YLCSGSRPLK). Residues 193-252 (YISNSCQPQSYLVRNYHYSSYRPTSCRPLSYLSRSFRSLSYIPSTFPPLRYLCSGSRPLK) are 6 X 10 AA repeats of Y-[ILR]-[SVPC]-[NRTS]-[SNTG]-X-[QHRP]-[PSY]-[QSL]-[SRK].

It belongs to the PMG family. In terms of assembly, interacts with hair keratins. Specific expression in the middle/upper hair cuticle.

Functionally, in the hair cortex, hair keratin intermediate filaments are embedded in an interfilamentous matrix, consisting of hair keratin-associated proteins (KRTAP), which are essential for the formation of a rigid and resistant hair shaft through their extensive disulfide bond cross-linking with abundant cysteine residues of hair keratins. The matrix proteins include the high-sulfur and high-glycine-tyrosine keratins. The protein is Keratin-associated protein 24-1 (KRTAP24-1) of Homo sapiens (Human).